The primary structure comprises 156 residues: 6,7-dimethyl-8-ribityllumazine synthase (156 aa).

5-amino-6-(D-ribitylamino)uracil contacts are provided by residues Phe-23, 57 to 59 (AYE), and 81 to 83 (AII). Residue 86 to 87 (GT) participates in (2S)-2-hydroxy-3-oxobutyl phosphate binding. Catalysis depends on His-89, which acts as the Proton donor. A 5-amino-6-(D-ribitylamino)uracil-binding site is contributed by Phe-114. Arg-128 contributes to the (2S)-2-hydroxy-3-oxobutyl phosphate binding site.

This sequence belongs to the DMRL synthase family.

It carries out the reaction (2S)-2-hydroxy-3-oxobutyl phosphate + 5-amino-6-(D-ribitylamino)uracil = 6,7-dimethyl-8-(1-D-ribityl)lumazine + phosphate + 2 H2O + H(+). The protein operates within cofactor biosynthesis; riboflavin biosynthesis; riboflavin from 2-hydroxy-3-oxobutyl phosphate and 5-amino-6-(D-ribitylamino)uracil: step 1/2. Functionally, catalyzes the formation of 6,7-dimethyl-8-ribityllumazine by condensation of 5-amino-6-(D-ribitylamino)uracil with 3,4-dihydroxy-2-butanone 4-phosphate. This is the penultimate step in the biosynthesis of riboflavin. This is 6,7-dimethyl-8-ribityllumazine synthase from Helicobacter pylori (strain J99 / ATCC 700824) (Campylobacter pylori J99).